The primary structure comprises 707 residues: MSPRQPLVLALLVLGCCSAAPRRRQPTLVVFPGELRTRLTDRQLAEEYLFRYGYTRVASMHGDSQSLRLPLLLLQKHLSLPETGELDNATLEAMRAPRCGVPDVGKFQTFEGDLKWHHHNITYWIQNYSEDLPRDVIDDAFARAFALWSAVTPLTFTRVYSRDADIVIQFGVAEHGDGYPFDGKDGLLAHAFPPGPGIQGDAHFDDEELWSLGKGVVVPTYFGNADGAPCHFPFTFEGRSYTACTTDGRSDGMAWCSTTADYDTDRRFGFCPSERLYTQDGNADGKPCEFPFIFQGRTYSACTTDGRSDGHRWCATTASYDKDKLYGFCPTRADSTVVGGNSAGELCVFPFVFLGKEYSSCTSEGRRDGRLWCATTSNFDSDKKWGFCPDKGYSLFLVAAHEFGHALGLDHSSVPERLMYPMYRYLEGSPLHEDDVRGIQHLYGPNPNPQPPATTTPEPQPTAPPTACPTWPATVRPSEHPTTSPTGAPSAGPTGPPTASPSAAPTASLDPAEDVCNVNVFDAIAEIGNKLHVFKDGRYWRFSEGSGRRPQGPFLIADTWPALPAKLDSAFEEPLTKKLFFFSGRQVWVYTGASVLGPRRLDKLGLGPEVPHVTGALPRAGGKVLLFGAQRFWRFDVKTQTVDSRSGAPVDQMFPGVPLNTHDVFQYREKAYFCQDRFFWRVSTRNEVNLVDQVGYVSFDILHCPED.

The signal sequence occupies residues 1–19 (MSPRQPLVLALLVLGCCSA). Positions 20 to 106 (APRRRQPTLV…PRCGVPDVGK (87 aa)) are cleaved as a propeptide — activation peptide. The N-linked (GlcNAc...) asparagine glycan is linked to Asn-88. The short motif at 97 to 104 (PRCGVPDV) is the Cysteine switch element. Cys-99 is a binding site for Zn(2+). 2 N-linked (GlcNAc...) asparagine glycosylation sites follow: Asn-120 and Asn-127. The Ca(2+) site is built by Asp-131 and Asp-165. The Zn(2+) site is built by His-175 and Asp-177. Ca(2+) is bound by residues Asp-182, Gly-183, Asp-185, and Leu-187. Residue His-190 coordinates Zn(2+). Ca(2+) is bound by residues Gly-197, Gln-199, and Asp-201. His-203 contacts Zn(2+). Residues Asp-205, Asp-206, and Glu-208 each contribute to the Ca(2+) site. Fibronectin type-II domains lie at 225-273 (ADGA…FCPS), 283-331 (ADGK…FCPT), and 342-390 (SAGE…FCPD). Disulfide bonds link Cys-230-Cys-256, Cys-244-Cys-271, Cys-288-Cys-314, Cys-302-Cys-329, Cys-347-Cys-373, and Cys-361-Cys-388. Residue His-401 participates in Zn(2+) binding. Residue Glu-402 is part of the active site. Residues His-405 and His-411 each coordinate Zn(2+). The tract at residues 437–508 (RGIQHLYGPN…ASPSAAPTAS (72 aa)) is disordered. Residues 446-467 (NPNPQPPATTTPEPQPTAPPTA) show a composition bias toward pro residues. A compositionally biased stretch (low complexity) spans 481–493 (PTTSPTGAPSAGP). Cys-516 and Cys-704 are joined by a disulfide. 4 Hemopexin repeats span residues 518–563 (VNVF…WPAL), 564–608 (PAKL…GLGP), 610–657 (VPHV…FPGV), and 658–704 (PLNT…ILHC).

This sequence belongs to the peptidase M10A family. As to quaternary structure, exists as monomer or homodimer; disulfide-linked. Also exists as heterodimer with LCN2. Macrophages and transformed cell lines produce only the monomeric form. Interacts with ECM1. Zn(2+) serves as cofactor. It depends on Ca(2+) as a cofactor. Post-translationally, N- and O-glycosylated. In terms of tissue distribution, osteoclasts.

It is found in the secreted. It localises to the extracellular space. Its subcellular location is the extracellular matrix. The catalysed reaction is Cleavage of gelatin types I and V and collagen types IV and V.. Its function is as follows. Matrix metalloproteinase that plays an essential role in local proteolysis of the extracellular matrix and in leukocyte migration. Could play a role in bone osteoclastic resorption. Cleaves KiSS1 at a Gly-|-Leu bond. Cleaves NINJ1 to generate the Secreted ninjurin-1 form. Cleaves type IV and type V collagen into large C-terminal three quarter fragments and shorter N-terminal one quarter fragments. Degrades fibronectin but not laminin or Pz-peptide. The sequence is that of Matrix metalloproteinase-9 from Oryctolagus cuniculus (Rabbit).